A 53-amino-acid chain; its full sequence is Bowman-Birk type proteinase inhibitor II-4 (53 aa).

Intrachain disulfides connect cysteine 8–cysteine 23, cysteine 13–cysteine 21, cysteine 30–cysteine 37, and cysteine 34–cysteine 49.

It belongs to the Bowman-Birk serine protease inhibitor family.

The protein is Bowman-Birk type proteinase inhibitor II-4 of Triticum aestivum (Wheat).